Reading from the N-terminus, the 136-residue chain is Holo-[acyl-carrier-protein] synthase (136 aa).

Mg(2+) is bound by residues Asp8 and Glu57.

It belongs to the P-Pant transferase superfamily. AcpS family. The cofactor is Mg(2+).

It is found in the cytoplasm. The enzyme catalyses apo-[ACP] + CoA = holo-[ACP] + adenosine 3',5'-bisphosphate + H(+). In terms of biological role, transfers the 4'-phosphopantetheine moiety from coenzyme A to a Ser of acyl-carrier-protein. The chain is Holo-[acyl-carrier-protein] synthase from Azorhizobium caulinodans (strain ATCC 43989 / DSM 5975 / JCM 20966 / LMG 6465 / NBRC 14845 / NCIMB 13405 / ORS 571).